The chain runs to 272 residues: Acyl-[acyl-carrier-protein]--UDP-N-acetylglucosamine O-acyltransferase (272 aa).

It belongs to the transferase hexapeptide repeat family. LpxA subfamily. In terms of assembly, homotrimer.

It localises to the cytoplasm. The enzyme catalyses a (3R)-hydroxyacyl-[ACP] + UDP-N-acetyl-alpha-D-glucosamine = a UDP-3-O-[(3R)-3-hydroxyacyl]-N-acetyl-alpha-D-glucosamine + holo-[ACP]. It functions in the pathway glycolipid biosynthesis; lipid IV(A) biosynthesis; lipid IV(A) from (3R)-3-hydroxytetradecanoyl-[acyl-carrier-protein] and UDP-N-acetyl-alpha-D-glucosamine: step 1/6. In terms of biological role, involved in the biosynthesis of lipid A, a phosphorylated glycolipid that anchors the lipopolysaccharide to the outer membrane of the cell. This chain is Acyl-[acyl-carrier-protein]--UDP-N-acetylglucosamine O-acyltransferase, found in Rhizobium etli (strain ATCC 51251 / DSM 11541 / JCM 21823 / NBRC 15573 / CFN 42).